The chain runs to 506 residues: ATP synthase subunit alpha, chloroplastic (506 aa).

ATP is bound at residue 170–177 (GDRQTGKT). T257 carries the post-translational modification Phosphothreonine.

The protein belongs to the ATPase alpha/beta chains family. As to quaternary structure, F-type ATPases have 2 components, CF(1) - the catalytic core - and CF(0) - the membrane proton channel. CF(1) has five subunits: alpha(3), beta(3), gamma(1), delta(1), epsilon(1). CF(0) has four main subunits: a, b, b' and c.

It is found in the plastid. Its subcellular location is the chloroplast thylakoid membrane. The enzyme catalyses ATP + H2O + 4 H(+)(in) = ADP + phosphate + 5 H(+)(out). Its function is as follows. Produces ATP from ADP in the presence of a proton gradient across the membrane. The alpha chain is a regulatory subunit. The protein is ATP synthase subunit alpha, chloroplastic of Olimarabidopsis pumila (Dwarf rocket).